Here is a 525-residue protein sequence, read N- to C-terminus: GMP synthase [glutamine-hydrolyzing] (525 aa).

A Glutamine amidotransferase type-1 domain is found at 9-207 (RILILDFGSQ…VLDVCQCEAL (199 aa)). Cys86 (nucleophile) is an active-site residue. Residues His181 and Glu183 contribute to the active site. A GMPS ATP-PPase domain is found at 208 to 400 (WTPASIIEDT…LGLPYDMLNR (193 aa)). 235–241 (SGGVDSS) contributes to the ATP binding site.

As to quaternary structure, homodimer.

The enzyme catalyses XMP + L-glutamine + ATP + H2O = GMP + L-glutamate + AMP + diphosphate + 2 H(+). The protein operates within purine metabolism; GMP biosynthesis; GMP from XMP (L-Gln route): step 1/1. Catalyzes the synthesis of GMP from XMP. This Photorhabdus laumondii subsp. laumondii (strain DSM 15139 / CIP 105565 / TT01) (Photorhabdus luminescens subsp. laumondii) protein is GMP synthase [glutamine-hydrolyzing].